The chain runs to 536 residues: Enterobactin synthase component E (536 aa).

The substrate site is built by Asn235, Ser240, Gly309, Val331, Ala335, Asp415, and Lys432. A phosphopantetheine binding region spans residues 438–439; that stretch reads GG. Lys441 provides a ligand contact to substrate.

The protein belongs to the ATP-dependent AMP-binding enzyme family. EntE subfamily. In terms of assembly, proteins EntB, EntD, EntE, and EntF form a multienzyme complex called enterobactin synthase. Monomer. EntA and EntE interact together.

The protein localises to the membrane. It carries out the reaction 3 2,3-dihydroxybenzoate + 3 L-serine + 6 ATP = enterobactin + 6 AMP + 6 diphosphate + 4 H(+). It catalyses the reaction 2,3-dihydroxybenzoate + holo-[ACP] + ATP = 2,3-dihydroxybenzoyl-[ACP] + AMP + diphosphate. The catalysed reaction is 2,3-dihydroxybenzoyl-5'-AMP + holo-[ACP] = 2,3-dihydroxybenzoyl-[ACP] + AMP + H(+). It functions in the pathway siderophore biosynthesis; enterobactin biosynthesis. Inhibited by the adenylate analogs, 5'-O-[N-(salicyl)sulfamoyl]adenosine (Sal-AMS) and 5'-O-[N-(2,3-dihydroxybenzoyl)sulfamoyl]adenosine (DHB-AMS). Adenylation of 2,3-dihydroxybenzoate (DHB) is enhanced by a protein-protein interaction between the EntA and EntE. Functionally, involved in the biosynthesis of the siderophore enterobactin (enterochelin), which is a macrocyclic trimeric lactone of N-(2,3-dihydroxybenzoyl)-serine. The serine trilactone serves as a scaffolding for the three catechol functionalities that provide hexadentate coordination for the tightly ligated iron(2+) atoms. EntE processes via a two-step adenylation-ligation reaction (bi-uni-uni-bi ping-pong mechanism). First, it catalyzes the activation of the carboxylate group of 2,3-dihydroxy-benzoate (DHB), via a reversible ATP-dependent pyrophosphate exchange reactions to yield the acyladenylate intermediate 2,3-dihydroxybenzoyl-AMP. It can also transfer AMP to salicylate, 2,4-dihydroxybenzoate, gentisate and 2,3,4-trihydroxybenzoate. In the second step, DHB is transferred from 2,3-dihydroxybenzoyl-AMP onto the phosphopantetheinylated EntB (holo-EntB) to form DHB-holo-EntB. Then this product will serve in the formation of the amide bond between 2,3-dihydroxybenzoate (DHB) and L-serine. It can also transfer adenylated salicylate to holo-EntB. The chain is Enterobactin synthase component E from Escherichia coli (strain K12).